Reading from the N-terminus, the 447-residue chain is Aladin (447 aa).

The interval 49 to 69 is disordered; that stretch reads STPSSLQENEGQENGDKASGE. WD repeat units lie at residues 97 to 138, 142 to 181, 210 to 250, and 252 to 291; these read LSEI…EPCI, DSQR…NMAL, QNDE…GTPI, and RGLG…SEPW.

As to quaternary structure, part of the nuclear pore complex (NPC). The NPC has an eight-fold symmetrical structure comprising a central transport channel and two rings, the cytoplasmic and nuclear rings, to which eight filaments are attached. The cytoplasmic filaments have loose ends, while the nuclear filaments are joined in a distal ring, forming a nuclear basket. NPCs are highly dynamic in configuration and composition, and can be devided in 3 subcomplexes, the NUP62 subcomplex, the NUP107-160 subcomplex and the NUP93 subcomplex, containing approximately 30 different nucleoporin proteins.

It localises to the nucleus envelope. The protein localises to the nucleus. The protein resides in the nuclear pore complex. The polypeptide is Aladin (Arabidopsis thaliana (Mouse-ear cress)).